Here is a 225-residue protein sequence, read N- to C-terminus: MADS-box transcription factor 5 (225 aa).

Residues 1 to 61 (MGRGKVELKR…GRLFEFSTSS (61 aa)) form the MADS-box domain. Residues 89–179 (ELSNYQEYLK…KRKIQETSGE (91 aa)) enclose the K-box domain.

As to quaternary structure, may interact with the K-box of MADS6.

The protein localises to the nucleus. Its function is as follows. Probable transcription factor. The chain is MADS-box transcription factor 5 (MADS5) from Oryza sativa subsp. indica (Rice).